A 255-amino-acid polypeptide reads, in one-letter code: Small ribosomal subunit protein eS1 (255 aa).

Residues 1–18 (MAVGKNKRLSKGKKGLKK) are compositionally biased toward basic residues. Residues 1-28 (MAVGKNKRLSKGKKGLKKRTQDPFSRKD) form a disordered region. Residue A2 is modified to N-acetylalanine; partial. The segment covering 19 to 28 (RTQDPFSRKD) has biased composition (basic and acidic residues).

The protein belongs to the eukaryotic ribosomal protein eS1 family. Component of the small ribosomal subunit. Mature ribosomes consist of a small (40S) and a large (60S) subunit. The 40S subunit contains about 33 different proteins and 1 molecule of RNA (18S). The 60S subunit contains about 49 different proteins and 3 molecules of RNA (25S, 5.8S and 5S).

The protein resides in the cytoplasm. The sequence is that of Small ribosomal subunit protein eS1 from Ajellomyces capsulatus (strain G186AR / H82 / ATCC MYA-2454 / RMSCC 2432) (Darling's disease fungus).